We begin with the raw amino-acid sequence, 122 residues long: ATP synthase epsilon chain (122 aa).

It belongs to the ATPase epsilon chain family. As to quaternary structure, F-type ATPases have 2 components, CF(1) - the catalytic core - and CF(0) - the membrane proton channel. CF(1) has five subunits: alpha(3), beta(3), gamma(1), delta(1), epsilon(1). CF(0) has three main subunits: a, b and c.

The protein resides in the cell membrane. In terms of biological role, produces ATP from ADP in the presence of a proton gradient across the membrane. This is ATP synthase epsilon chain from Rhodococcus opacus (strain B4).